Reading from the N-terminus, the 336-residue chain is DNA repair protein XRCC4 (336 aa).

An interaction with IFFO1 region spans residues 1–213; the sequence is MERKISRIHL…EREKDIKQEG (213 aa). Ser-53 is modified (phosphoserine; by PRKDC). 2 coiled-coil regions span residues 131 to 165 and 184 to 212; these read LDTI…FEKC and LNEK…IKQE. Residues 180–213 are interaction with LIG4; that stretch reads FILVLNEKKTKIRSLHNKLLNAAQEREKDIKQEG. Phosphoserine; by PRKDC is present on Ser-193. Residue Lys-210 forms a Glycyl lysine isopeptide (Lys-Gly) (interchain with G-Cter in SUMO) linkage. The tract at residues 212–249 is disordered; it reads EGETAICSEMTADRDPVYDESTDEESENQTDLSGLASA. A Phosphotyrosine modification is found at Tyr-229. Positions 229 to 239 are enriched in acidic residues; sequence YDESTDEESEN. Residue Ser-232 is modified to Phosphoserine. Thr-233 is subject to Phosphothreonine; by CK2. Residues Ser-237 and Ser-256 each carry the phosphoserine modification. At Ser-260 the chain carries Phosphoserine; by PRKDC. Positions 264-336 are disordered; the sequence is TDIAPSRKRR…SSPEDLFDEI (73 aa). Residues 270–275 carry the Nuclear localization signal motif; that stretch reads RKRRQR. Lys-296 participates in a covalent cross-link: Glycyl lysine isopeptide (Lys-Gly) (interchain with G-Cter in ubiquitin). Phosphoserine; by PRKDC occurs at positions 303, 304, 315, and 320. A compositionally biased stretch (polar residues) spans 317–329; the sequence is ENMSLETLRNSSP. Thr-323 carries the post-translational modification Phosphothreonine; by PRKDC. Phosphoserine; by PRKDC occurs at positions 327 and 328.

This sequence belongs to the XRCC4-XLF family. XRCC4 subfamily. Homodimer and homotetramer in solution. Interacts with NHEJ1/XLF; the interaction is direct and is mediated via a head-to-head interaction between N-terminal head regions. Interacts with LIG4; the LIG4-XRCC4 subcomplex has a 1:2 stoichiometry and XRCC4 is required for LIG4 stability. Component of the core long-range non-homologous end joining (NHEJ) complex (also named DNA-PK complex) composed of PRKDC, LIG4, XRCC4, XRCC6/Ku70, XRCC5/Ku86 and NHEJ1/XLF. Additional component of the NHEJ complex includes PAXX. Following autophosphorylation, PRKDC dissociates from DNA, leading to formation of the short-range NHEJ complex, composed of LIG4, XRCC4, XRCC6/Ku70, XRCC5/Ku86 and NHEJ1/XLF. Interacts with PRKDC; the interaction is direct. Interacts with XRCC6/Ku70; the interaction is direct. Interacts with APTX and APLF. Forms a heterotetramer with IFFO1; the interaction involves LIG4-free XRCC4 and leads to the relocalization of IFFO1 to the sites of DNA damage. Interacts with PNKP; mainly interacts with PNKP when phosphorylated at Thr-233, but is also able to interact at much lower level with PNKP when not unphosphorylated. Interacts with POLL (DNA polymerase lambda). As to quaternary structure, interacts with XKR4; interacts with the processed form of XKR4, which is cleaved by caspase. Post-translationally, phosphorylated by PRKDC at the C-terminus in response to DNA damage; Ser-260 and Ser-320 constitute the main phosphorylation sites. Phosphorylations by PRKDC at the C-terminus of XRCC4 and NHEJ1/XLF are highly redundant and regulate ability of the XRCC4-NHEJ1/XLF subcomplex to bridge DNA. Phosphorylation by PRKDC does not prevent interaction with NHEJ1/XLF but disrupts ability to bridge DNA and promotes detachment from DNA. Phosphorylation at Ser-327 and Ser-328 by PRKDC promotes recognition by the SCF(FBXW7) complex and subsequent ubiquitination via 'Lys-63'-linked ubiquitin. Phosphorylation at Thr-233 by CK2 promotes interaction with PNKP; regulating PNKP activity and localization to DNA damage sites. Phosphorylation by CK2 promotes interaction with APTX. Ubiquitinated at Lys-296 by the SCF(FBXW7) complex via 'Lys-63'-linked ubiquitination, thereby promoting double-strand break repair: the SCF(FBXW7) complex specifically recognizes XRCC4 when phosphorylated at Ser-327 and Ser-328 by PRKDC, and 'Lys-63'-linked ubiquitination facilitates DNA non-homologous end joining (NHEJ) by enhancing association with XRCC5/Ku80 and XRCC6/Ku70. Monoubiquitinated. In terms of processing, undergoes proteolytic processing by caspase-3 (CASP3). This generates the protein XRCC4, C-terminus (XRCC4/C), which translocates to the cytoplasm and activates phospholipid scramblase activity of XKR4, thereby promoting phosphatidylserine exposure on apoptotic cell surface. As to expression, widely expressed.

It localises to the nucleus. The protein resides in the chromosome. Its subcellular location is the cytoplasm. Functionally, DNA non-homologous end joining (NHEJ) core factor, required for double-strand break repair and V(D)J recombination. Acts as a scaffold protein that regulates recruitment of other proteins to DNA double-strand breaks (DSBs). Associates with NHEJ1/XLF to form alternating helical filaments that bridge DNA and act like a bandage, holding together the broken DNA until it is repaired. The XRCC4-NHEJ1/XLF subcomplex binds to the DNA fragments of a DSB in a highly diffusive manner and robustly bridges two independent DNA molecules, holding the broken DNA fragments in close proximity to one other. The mobility of the bridges ensures that the ends remain accessible for further processing by other repair factors. Plays a key role in the NHEJ ligation step of the broken DNA during DSB repair via direct interaction with DNA ligase IV (LIG4): the LIG4-XRCC4 subcomplex reseals the DNA breaks after the gap filling is completed. XRCC4 stabilizes LIG4, regulates its subcellular localization and enhances LIG4's joining activity. Binding of the LIG4-XRCC4 subcomplex to DNA ends is dependent on the assembly of the DNA-dependent protein kinase complex DNA-PK to these DNA ends. Promotes displacement of PNKP from processed strand break termini. Acts as an activator of the phospholipid scramblase activity of XKR4. This form, which is generated upon caspase-3 (CASP3) cleavage, translocates into the cytoplasm and interacts with XKR4, thereby promoting phosphatidylserine scramblase activity of XKR4 and leading to phosphatidylserine exposure on apoptotic cell surface. This Homo sapiens (Human) protein is DNA repair protein XRCC4.